Here is a 689-residue protein sequence, read N- to C-terminus: MADNLVIVESPAKAKTIEKYLGKKYKVIASMGHVRDLPRSQMGVDTEDNYEPKYITIRGKGPVVKELKKHAKKAKNVFLASDPDREGEAIAWHLSKILELEDSKENRVVFNEITKDAVKESFKNPREIEMNLVDAQQARRILDRLVGYNISPVLWKKVKKGLSAGRVQSVALRLVIDRENEIRNFKPEEYWTIEGEFRYKKSKFNAKFLHYKNKPFKLKTKKDVEKITAALDGDQFEITNVTKKEKTRNPANPFTTSTLQQEAARKLNFKARKTMMVAQQLYEGIDLKKQGTIGLITYMRTDSTRISDTAKVEAKQYITDKYGESYTSKRKASGKQGDQDAHEAIRPSSTMRTPDDMKSFLTKDQYRLYKLIWERFVASQMAPAILDTVSLDITQGDIKFRANGQTIKFKGFMTLYVETKDDSDSEKENKLPKLEQGDKVTATQIEPAQHYTQPPPRYTEARLVKTLEELKIGRPSTYAPTIDTIQKRNYVKLESKRFVPTELGEIVHEQVKEYFPEIIDVEFTVNMETLLDKIAEGDITWRKVIDGFFSSFKQDVERAEEEMEKIEIKDEPAGEDCEICGSPMVIKMGRYGKFMACSNFPDCRNTKAIVKSIGVKCPKCNDGDVVERKSKKNRVFYGCSKYPECDFISWDKPIGRDCPKCNQYLVENKKGKTTQVICSNCDYKEAAQK.

A Toprim domain is found at 3 to 113 (DNLVIVESPA…KENRVVFNEI (111 aa)). Mg(2+) is bound by residues Glu-9 and Asp-82. The Topo IA-type catalytic domain occupies 129 to 557 (EMNLVDAQQA…FFSSFKQDVE (429 aa)). The tract at residues 163–168 (SAGRVQ) is interaction with DNA. The O-(5'-phospho-DNA)-tyrosine intermediate role is filled by Tyr-298. The segment at 328–356 (SKRKASGKQGDQDAHEAIRPSSTMRTPDD) is disordered. 3 consecutive C4-type zinc fingers follow at residues 577–603 (CEICGSPMVIKMGRYGKFMACSNFPDC), 617–645 (CPKCNDGDVVERKSKKNRVFYGCSKYPEC), and 658–681 (CPKCNQYLVENKKGKTTQVICSNC).

Belongs to the type IA topoisomerase family. As to quaternary structure, monomer. Mg(2+) serves as cofactor.

The catalysed reaction is ATP-independent breakage of single-stranded DNA, followed by passage and rejoining.. Functionally, releases the supercoiling and torsional tension of DNA, which is introduced during the DNA replication and transcription, by transiently cleaving and rejoining one strand of the DNA duplex. Introduces a single-strand break via transesterification at a target site in duplex DNA. The scissile phosphodiester is attacked by the catalytic tyrosine of the enzyme, resulting in the formation of a DNA-(5'-phosphotyrosyl)-enzyme intermediate and the expulsion of a 3'-OH DNA strand. The free DNA strand then undergoes passage around the unbroken strand, thus removing DNA supercoils. Finally, in the religation step, the DNA 3'-OH attacks the covalent intermediate to expel the active-site tyrosine and restore the DNA phosphodiester backbone. This Staphylococcus aureus (strain USA300) protein is DNA topoisomerase 1.